The primary structure comprises 592 residues: Aspartate--tRNA(Asp/Asn) ligase (592 aa).

Residue Glu-182 participates in L-aspartate binding. Residues 206–209 (QIFK) form an aspartate region. Residue Arg-228 participates in L-aspartate binding. Residues 228–230 (RDE) and Gln-237 contribute to the ATP site. An L-aspartate-binding site is contributed by His-455. Glu-489 is an ATP binding site. Arg-496 contributes to the L-aspartate binding site. 541 to 544 (GLDR) is an ATP binding site.

It belongs to the class-II aminoacyl-tRNA synthetase family. Type 1 subfamily. Homodimer.

Its subcellular location is the cytoplasm. The catalysed reaction is tRNA(Asx) + L-aspartate + ATP = L-aspartyl-tRNA(Asx) + AMP + diphosphate. Aspartyl-tRNA synthetase with relaxed tRNA specificity since it is able to aspartylate not only its cognate tRNA(Asp) but also tRNA(Asn). Reaction proceeds in two steps: L-aspartate is first activated by ATP to form Asp-AMP and then transferred to the acceptor end of tRNA(Asp/Asn). The protein is Aspartate--tRNA(Asp/Asn) ligase of Thermoanaerobacter pseudethanolicus (strain ATCC 33223 / 39E) (Clostridium thermohydrosulfuricum).